Reading from the N-terminus, the 296-residue chain is uncharacterized protein (296 aa).

The chain crosses the membrane as a helical span at residues 7–26; that stretch reads CFSLVCALGASTYLLWRGWL.

Its subcellular location is the membrane. This is an uncharacterized protein from Treponema pallidum (strain Nichols).